The following is a 277-amino-acid chain: S-formylglutathione hydrolase FrmB (277 aa).

Residues Ser-145, Asp-221, and His-254 each act as charge relay system in the active site.

It belongs to the esterase D family.

The catalysed reaction is S-formylglutathione + H2O = formate + glutathione + H(+). Its function is as follows. Serine hydrolase involved in the detoxification of formaldehyde. Hydrolyzes S-formylglutathione to glutathione and formate. This chain is S-formylglutathione hydrolase FrmB (frmB), found in Escherichia coli O6:H1 (strain CFT073 / ATCC 700928 / UPEC).